The sequence spans 137 residues: Large ribosomal subunit protein uL16 (137 aa).

It belongs to the universal ribosomal protein uL16 family. Part of the 50S ribosomal subunit.

Its function is as follows. Binds 23S rRNA and is also seen to make contacts with the A and possibly P site tRNAs. The chain is Large ribosomal subunit protein uL16 from Rhodopseudomonas palustris (strain BisB5).